A 499-amino-acid polypeptide reads, in one-letter code: Endosomal/lysosomal proton channel TMEM175 (499 aa).

The span at 1–10 (MSRLQVQEQA) shows a compositional bias: polar residues. The interval 1–26 (MSRLQVQEQAVDSEGDSSLYRRDEEG) is disordered. Topologically, residues 1-30 (MSRLQVQEQAVDSEGDSSLYRRDEEGTQSS) are cytoplasmic. Residues 31 to 53 (HRMLGFSDALLSIIATVMILPVT) form a helical membrane-spanning segment. A RxxxFSD motif 1 motif is present at residues 32-38 (RMLGFSD). Over 54–74 (HTEISPEQQFDKSIQKLLATR) the chain is Lumenal. A short helix H1-1 region spans residues 55–60 (TEISPE). Residues 62 to 68 (QFDKSIQ) form a short helix H2-1 region. The chain crosses the membrane as a helical span at residues 75-97 (IAVYLMTFLIVTVAWAAHTRLFQ). The Cytoplasmic segment spans residues 98–103 (VVGKID). Residues 104 to 125 (DTLALLNLACMMTITLLPYTFS) form a helical membrane-spanning segment. Over 126 to 135 (LMVTFPDVPL) the chain is Lumenal. A helical transmembrane segment spans residues 136-157 (GIFLFCMCVIAIGSVQAMIVGY). The Cytoplasmic portion of the chain corresponds to 158–181 (AFHFPHLLNPQIQCSTHRALSRRH). The chain crosses the membrane as a helical span at residues 182-202 (ILHLVLRGPALCFVAAVFSLF). Topologically, residues 203–207 (FFPLS) are lumenal. Residues 208 to 227 (YLLMVTVIFLPHISKATTWC) traverse the membrane as a helical segment. The Cytoplasmic segment spans residues 228–254 (KDKFMGHRESPAHNVEPFSIDLHAPLS). The chain crosses the membrane as a helical span at residues 255-279 (KERVEAFSDGVYAIVATLLILDICE). Residues 257-263 (RVEAFSD) carry the RxxxFSD motif 2 motif. Residues 280–306 (DNVPDPKDVQQKFSGSLVAALGAYGPQ) are Lumenal-facing. Positions 285-293 (PKDVQQKFS) are short helix H1-2. The short helix H2-2 stretch occupies residues 295 to 301 (SLVAALG). The chain crosses the membrane as a helical span at residues 307 to 329 (FLAYFGSFATVGLLWFAHHSLFL). Topologically, residues 330–335 (HVRKAT) are cytoplasmic. The chain crosses the membrane as a helical span at residues 336–357 (QTMGLFNILSLAFVGGLPLAYQ). At 358–372 (QTSAFARQPRDELER) the chain is on the lumenal side. A helical transmembrane segment spans residues 373-393 (VRVSCAIIFFASIFQFAIWTT). Topologically, residues 394–413 (ALLHQRETLQPAVQFGGQEH) are cytoplasmic. The chain crosses the membrane as a helical span at residues 414–437 (AFMFAKLALYPCASLLAFAATCLL). Topologically, residues 438 to 439 (SR) are lumenal. The helical transmembrane segment at 440-466 (FSTAIFHLMQIAVPFAFLLLRLLVRLA) threads the bilayer. Topologically, residues 467 to 499 (LAGLQVLWDLWPERPQQDQGEPETQSQLLPASC) are cytoplasmic.

This sequence belongs to the TMEM175 family. As to quaternary structure, homodimer. Interacts with AKT (AKT1, AKT2 or AKT3); leading to formation of the lysoK(GF) complex, which activates the channel. Interacts with LAMP1; inhibiting the proton channel activity of TMEM175. Interacts with LAMP2; inhibiting the proton channel activity of TMEM175.

It localises to the endosome membrane. It is found in the lysosome membrane. The enzyme catalyses H(+)(in) = H(+)(out). The catalysed reaction is K(+)(in) = K(+)(out). Its activity is regulated as follows. Active at low pH (under pH 4.6): proton channel activity is activated by luminal side protons. Polyunsaturated fatty acids, such as arachidonic acid, also activate the channel activity. Proton channel activity is directly inhibited by LAMP1 or LAMP2, facilitating lysosomal acidification. Channel activity is activated following interaction with AKT (AKT1, AKT2 or AKT3): interaction promotes activation from closed to an open state. Activation by AKT is independent of AKT serine/threonine-protein kinase activity. Its function is as follows. Proton-activated proton channel that catalyzes proton efflux from endosomes and lysosomes to maintain a steady-state pH. Activated at low pH (under pH 4.6) by luminal side protons: selectively mediates lysosomal proton release from lysosomes, eliciting a proton leak that balances V-ATPase activity to maintain pH homeostasis. Regulation of lumenal pH stability is required for autophagosome-lysosome fusion. Also acts as a potassium channel at higher pH, regulating potassium conductance in endosomes and lysosomes. Constitutes the pore-forming subunit of the lysoK(GF) complex, a complex activated by extracellular growth factors. The lysoK(GF) complex is composed of TMEM175 and AKT (AKT1, AKT2 or AKT3), a major target of growth factor receptors: in the complex, TMEM175 channel is opened by conformational changes by AKT, leading to its activation. The lysoK(GF) complex is required to protect neurons against stress-induced damage. The protein is Endosomal/lysosomal proton channel TMEM175 of Rattus norvegicus (Rat).